The primary structure comprises 421 residues: Diaminopimelate decarboxylase (421 aa).

Lys63 bears the N6-(pyridoxal phosphate)lysine mark. Residues Gly242 and 278-281 (EPGR) contribute to the pyridoxal 5'-phosphate site. Residues Arg281, Arg317, and Tyr321 each coordinate substrate. The active-site Proton donor is Cys346. Residues Glu347 and Tyr375 each contribute to the substrate site. Residue Tyr375 coordinates pyridoxal 5'-phosphate.

This sequence belongs to the Orn/Lys/Arg decarboxylase class-II family. LysA subfamily. As to quaternary structure, homodimer. Pyridoxal 5'-phosphate serves as cofactor.

The enzyme catalyses meso-2,6-diaminopimelate + H(+) = L-lysine + CO2. The protein operates within amino-acid biosynthesis; L-lysine biosynthesis via DAP pathway; L-lysine from DL-2,6-diaminopimelate: step 1/1. Functionally, specifically catalyzes the decarboxylation of meso-diaminopimelate (meso-DAP) to L-lysine. The protein is Diaminopimelate decarboxylase of Zymomonas mobilis subsp. mobilis (strain ATCC 31821 / ZM4 / CP4).